The primary structure comprises 167 residues: Endothelin-3 (167 aa).

A signal peptide spans 1 to 19 (MELGLWLLLGLTVTSAAAA). Positions 20 to 50 (LPAQPGNAGQERGPGRSGDQEEKRVPAHHRP) are excised as a propeptide. Residues 22–45 (AQPGNAGQERGPGRSGDQEEKRVP) form a disordered region. Disulfide bonds link Cys-53/Cys-67 and Cys-55/Cys-63. Positions 74–167 (INTPEQTVPY…KSRTDKVHQP (94 aa)) are excised as a propeptide. The disordered stretch occupies residues 85–112 (LSNHRGSLRGKRSSGPVPESSQSSPQTR). A compositionally biased stretch (low complexity) spans 97 to 109 (SSGPVPESSQSSP). The interval 115 to 135 (CACSGVDDKACAYFCAHVTSY) is endothelin-like. Positions 140-149 (EKAAAEEKQE) are enriched in basic and acidic residues. The interval 140–167 (EKAAAEEKQETGGPRQRLKSRTDKVHQP) is disordered.

Belongs to the endothelin/sarafotoxin family.

The protein resides in the secreted. Functionally, endothelins are endothelium-derived vasoconstrictor peptides. The protein is Endothelin-3 (Edn3) of Rattus norvegicus (Rat).